The primary structure comprises 153 residues: Cytochrome c-554 (153 aa).

A signal peptide spans 1-20; the sequence is MRPIPALALTFSLVAMPALA. At Gln-21 the chain carries Pyrrolidone carboxylic acid. 4 residues coordinate heme c: Met-37, Cys-142, Cys-145, and His-146.

Post-translationally, binds 1 heme c group covalently per subunit.

The protein localises to the periplasm. Monoheme c-type cytochrome, that is particularly expressed when cells generate energy via aerobic respiration. The protein is Cytochrome c-554 (cycF) of Cereibacter sphaeroides (strain ATCC 17023 / DSM 158 / JCM 6121 / CCUG 31486 / LMG 2827 / NBRC 12203 / NCIMB 8253 / ATH 2.4.1.) (Rhodobacter sphaeroides).